The sequence spans 331 residues: tRNA N6-adenosine threonylcarbamoyltransferase (331 aa).

3 residues coordinate Fe cation: histidine 109, histidine 113, and tyrosine 130. Substrate-binding positions include 130 to 134, aspartate 162, aspartate 183, and serine 262; that span reads YLSGG. Aspartate 290 lines the Fe cation pocket.

Belongs to the KAE1 / TsaD family. Fe(2+) is required as a cofactor.

It localises to the cytoplasm. It carries out the reaction L-threonylcarbamoyladenylate + adenosine(37) in tRNA = N(6)-L-threonylcarbamoyladenosine(37) in tRNA + AMP + H(+). Its function is as follows. Required for the formation of a threonylcarbamoyl group on adenosine at position 37 (t(6)A37) in tRNAs that read codons beginning with adenine. Is probably involved in the transfer of the threonylcarbamoyl moiety of threonylcarbamoyl-AMP (TC-AMP) to the N6 group of A37. This Saccharolobus islandicus (strain Y.G.57.14 / Yellowstone #1) (Sulfolobus islandicus) protein is tRNA N6-adenosine threonylcarbamoyltransferase.